The following is a 61-amino-acid chain: Cecropin-D (61 aa).

The first 22 residues, 1–22 (MKFSKIFVFVFAIVFATASVSA), serve as a signal peptide directing secretion. Residues 23–24 (AP) constitute a propeptide, removed by a dipeptidylpeptidase. Q60 is modified (glutamine amide).

It belongs to the cecropin family. Mainly in fat body. Lower in hemocytes. Not expressed in midguts, malpighian tubules and silk glands.

It localises to the secreted. Cecropins have lytic and antibacterial activity against several Gram-positive and Gram-negative bacteria. This is Cecropin-D (CECD) from Bombyx mori (Silk moth).